Here is a 343-residue protein sequence, read N- to C-terminus: Biotin synthase (343 aa).

Residues 64–291 form the Radical SAM core domain; that stretch reads NTVQLSTLLS…RAMVRLSAGR (228 aa). [4Fe-4S] cluster is bound by residues Cys79, Cys83, and Cys86. Positions 123, 154, 214, and 286 each coordinate [2Fe-2S] cluster.

This sequence belongs to the radical SAM superfamily. Biotin synthase family. Homodimer. [4Fe-4S] cluster serves as cofactor. The cofactor is [2Fe-2S] cluster.

It catalyses the reaction (4R,5S)-dethiobiotin + (sulfur carrier)-SH + 2 reduced [2Fe-2S]-[ferredoxin] + 2 S-adenosyl-L-methionine = (sulfur carrier)-H + biotin + 2 5'-deoxyadenosine + 2 L-methionine + 2 oxidized [2Fe-2S]-[ferredoxin]. It functions in the pathway cofactor biosynthesis; biotin biosynthesis; biotin from 7,8-diaminononanoate: step 2/2. Functionally, catalyzes the conversion of dethiobiotin (DTB) to biotin by the insertion of a sulfur atom into dethiobiotin via a radical-based mechanism. The chain is Biotin synthase from Cupriavidus necator (strain ATCC 17699 / DSM 428 / KCTC 22496 / NCIMB 10442 / H16 / Stanier 337) (Ralstonia eutropha).